We begin with the raw amino-acid sequence, 117 residues long: Protein MGF 110-13L (117 aa).

The N-terminal stretch at 1–16 is a signal peptide; it reads MKLFVLLSILVWLAQP.

It belongs to the asfivirus MGF 110 family.

The chain is Protein MGF 110-13L from Ornithodoros (relapsing fever ticks).